The following is an 837-amino-acid chain: Tuftelin-interacting protein 11 (837 aa).

A compositionally biased stretch (basic and acidic residues) spans 1-13; that stretch reads MSLSHLYRDGEGH. 3 disordered regions span residues 1-31, 54-73, and 85-136; these read MSLS…DWDL, WAER…RARD, and LKKG…AGGT. The tract at residues 1–50 is required for interaction with DHX15; the sequence is MSLSHLYRDGEGHMDDDEDERENFEITDWDLQNEFNPNRQRHWQTKEEAT. S2 is modified (phosphoserine). Over residues 14-28 the composition is skewed to acidic residues; that stretch reads MDDDEDERENFEITD. Positions 54-64 are enriched in basic and acidic residues; sequence WAERDSDEERP. Phosphoserine is present on residues S59 and S98. Residues 91-102 are compositionally biased toward acidic residues; that stretch reads EEAELEDSDDEE. Residues 103 to 116 are compositionally biased toward basic and acidic residues; that stretch reads KPVKQDEFPKDFGP. At S144 the chain carries Phosphoserine. One can recognise a G-patch domain in the interval 149–195; it reads TKGIGQKLLQKMGYVPGRGLGKNAQGIINPIEAKQRKGKGAVGAYGS. Disordered stretches follow at residues 183 to 236 and 287 to 313; these read QRKG…KKKP and HKHS…ARAP. Position 210 is a phosphoserine (S210). Over residues 217–231 the composition is skewed to basic and acidic residues; that stretch reads EFQKELSQWRKDPSG. The Nuclear localization signal motif lies at 700-705; that stretch reads VKDKFN. The tract at residues 710–734 is required for nuclear speckle localization; it reads IMNRAVSSNVGAYMQPGAREHIAYL.

Belongs to the TFP11/STIP family. Identified in the spliceosome C complex. Found in the Intron Large (IL) complex, a post-mRNA release spliceosomal complex containing the excised intron, U2, U5 and U6 snRNPs, and splicing factors. Interacts with TUFT1. Interacts with DHX15; indicative for a recruitment of DHX15 to the IL complex. Interacts with GCFC2.

Its subcellular location is the cytoplasm. The protein resides in the nucleus. Functionally, involved in pre-mRNA splicing, specifically in spliceosome disassembly during late-stage splicing events. Intron turnover seems to proceed through reactions in two lariat-intron associated complexes termed Intron Large (IL) and Intron Small (IS). In cooperation with DHX15 seems to mediate the transition of the U2, U5 and U6 snRNP-containing IL complex to the snRNP-free IS complex leading to efficient debranching and turnover of excised introns. May play a role in the differentiation of ameloblasts and odontoblasts or in the forming of the enamel extracellular matrix. This chain is Tuftelin-interacting protein 11 (TFIP11), found in Bos taurus (Bovine).